Consider the following 97-residue polypeptide: Acylphosphatase (97 aa).

One can recognise an Acylphosphatase-like domain in the interval 11–97; that stretch reads TYYVRVRGTV…EKRYERFEQH (87 aa). Catalysis depends on residues R26 and N44. The tract at residues 76-97 is disordered; that stretch reads RVTEVSGEERSTEKRYERFEQH. Basic and acidic residues predominate over residues 82–97; it reads GEERSTEKRYERFEQH.

Belongs to the acylphosphatase family.

The enzyme catalyses an acyl phosphate + H2O = a carboxylate + phosphate + H(+). The sequence is that of Acylphosphatase (acyP) from Paraburkholderia xenovorans (strain LB400).